The chain runs to 507 residues: Histidine ammonia-lyase (507 aa).

A cross-link (5-imidazolinone (Ala-Gly)) is located at residues 141-143 (ASG). Serine 142 carries the 2,3-didehydroalanine (Ser) modification.

It belongs to the PAL/histidase family. Contains an active site 4-methylidene-imidazol-5-one (MIO), which is formed autocatalytically by cyclization and dehydration of residues Ala-Ser-Gly.

The protein resides in the cytoplasm. The enzyme catalyses L-histidine = trans-urocanate + NH4(+). The protein operates within amino-acid degradation; L-histidine degradation into L-glutamate; N-formimidoyl-L-glutamate from L-histidine: step 1/3. This chain is Histidine ammonia-lyase, found in Cereibacter sphaeroides (strain ATCC 17023 / DSM 158 / JCM 6121 / CCUG 31486 / LMG 2827 / NBRC 12203 / NCIMB 8253 / ATH 2.4.1.) (Rhodobacter sphaeroides).